The sequence spans 208 residues: Sec-independent protein translocase protein TatB (208 aa).

The helical transmembrane segment at 1–21 (MFDIGVGELTLIAVVALVVLG) threads the bilayer. Residues 178 to 189 (APEPVAVAPVDA) are compositionally biased toward low complexity. The segment at 178-208 (APEPVAVAPVDAGTPAAWTPSAPAKLQEKQP) is disordered.

Belongs to the TatB family. The Tat system comprises two distinct complexes: a TatABC complex, containing multiple copies of TatA, TatB and TatC subunits, and a separate TatA complex, containing only TatA subunits. Substrates initially bind to the TatABC complex, which probably triggers association of the separate TatA complex to form the active translocon.

The protein resides in the cell inner membrane. In terms of biological role, part of the twin-arginine translocation (Tat) system that transports large folded proteins containing a characteristic twin-arginine motif in their signal peptide across membranes. Together with TatC, TatB is part of a receptor directly interacting with Tat signal peptides. TatB may form an oligomeric binding site that transiently accommodates folded Tat precursor proteins before their translocation. This Xanthomonas euvesicatoria pv. vesicatoria (strain 85-10) (Xanthomonas campestris pv. vesicatoria) protein is Sec-independent protein translocase protein TatB.